The sequence spans 49 residues: uncharacterized protein (49 aa).

The helical transmembrane segment at 6–28 threads the bilayer; that stretch reads IYPLTVFYFFAIEMSVFCYYNWF.

The protein localises to the membrane. This is an uncharacterized protein from Saccharomyces cerevisiae (strain ATCC 204508 / S288c) (Baker's yeast).